The sequence spans 87 residues: Mitochondrial import protein 2 (87 aa).

The Cytoplasmic portion of the chain corresponds to 1–53 (MADSEDTSVILQGIDTINSVEGLEEDGYLSDEDTSLSNELADAQRQWEESLQQ). A helical membrane pass occupies residues 54–71 (LNKLLNWVLLPLLGKYIG). Residues 72-87 (RRMAKTLWSRFIEHFV) lie on the Mitochondrial intermembrane side of the membrane.

Belongs to the MIM2 family. As to quaternary structure, component of the MIM complex containing at least MIM1 and MIM2. Interacts with MIM1; interaction is direct.

The protein localises to the mitochondrion outer membrane. Component of the MIM complex required for outer membrane protein import. Involved in import of the subset of proteins with multiple alpha-helical transmembrane segments, including UGO1, TOM20 and FZO1. This Saccharomyces cerevisiae (strain ATCC 204508 / S288c) (Baker's yeast) protein is Mitochondrial import protein 2.